Reading from the N-terminus, the 630-residue chain is MDEMATTQISKDELDELKEAFAKVDLNSNGFICDYELHELFKEANMPLPGYKVREIIQKLMLDGDRNKDGKISFNEFVYIFQEVKSSDIAKTFRKAINRKEGICALGGTSELSSEGTQHSYSEEEKYAFVNWINKALENDPDCRHVIPMNPNTDDLFKAVGDGIVLCKMINLSVPDTIDERAINKKKLTPFIIQENLNLALNSASAIGCHVVNIGAEDLRAGKPHLVLGLLWQIIKIGLFADIELSRNEALAALLRDGETLEELMKLSPEELLLRWANFHLENSGWQKINNFSADIKDSKAYFHLLNQIAPKGQKEGEPRIDINMSGFNETDDLKRAESMLQQADKLGCRQFVTPADVVSGNPKLNLAFVANLFNKYPALTKPENQDIDWTLLEGETREERTFRNWMNSLGVNPHVNHLYVDLQDALVILQLYERIKVPVDWSKVNKPPYPKLGANMKKLENCNYAVELGKNQAKFSLVGIGGQDLNDGNPTLTLAVVWQLMRRYTLNVMEDLGEGQKATDDIIVNWVNGTLSEAGKSTSIQSFKDKTISSSLAVVDLIDAIQPGCINYDLVKTGNLTEEDKHNNAKYAVSMARRIGARVYALPEDLVEVKPKMVMTVFACLMGRGMKSV.

2 EF-hand domains span residues 12–47 (DELDELKEAFAKVDLNSNGFICDYELHELFKEANMP) and 52–87 (KVREIIQKLMLDGDRNKDGKISFNEFVYIFQEVKSS). Positions 25, 27, 29, 36, 65, 67, 69, 71, and 76 each coordinate Ca(2+). Actin-binding regions lie at residues 109–382 (TSEL…ALTK) and 383–627 (PENQ…GRGM). 2 Calponin-homology (CH) domains span residues 123–239 (EEEK…KIGL) and 267–378 (LSPE…NKYP). 4 positions are modified to phosphoserine: Ser-268, Ser-293, Ser-326, and Ser-339. Phosphothreonine is present on Thr-391. 2 consecutive Calponin-homology (CH) domains span residues 397–506 (TREE…RRYT) and 518–627 (KATD…GRGM).

As to quaternary structure, monomer.

Its subcellular location is the cytoplasm. In terms of biological role, actin-bundling protein. This is Plastin-3 (Pls3) from Rattus norvegicus (Rat).